We begin with the raw amino-acid sequence, 116 residues long: Small ribosomal subunit protein bS16 (116 aa).

Belongs to the bacterial ribosomal protein bS16 family.

The protein is Small ribosomal subunit protein bS16 of Chlamydia trachomatis serovar A (strain ATCC VR-571B / DSM 19440 / HAR-13).